A 406-amino-acid chain; its full sequence is Acetyltransferase sirH (406 aa).

A run of 6 helical transmembrane segments spans residues 9 to 29, 32 to 52, 63 to 83, 295 to 315, 323 to 343, and 358 to 378; these read IFIEAQLPLIYANIILAFALG, AHTFRVCLTLPILLFLVCQSL, LLSNNSLVMFTVFVYIDWILL, VQLFVGFGVSAGLHAGVALLC, SALFFFGIQAPIIMLEDHVIA, and FIGFVWTTLAIGFTCRAWVGS.

Belongs to the wax synthase family.

It is found in the membrane. It functions in the pathway mycotoxin biosynthesis. Acetyltransferase; part of the gene cluster that mediates the biosynthesis of sirodesmin PL, an epipolythiodioxopiperazine (ETP) characterized by a disulfide bridged cyclic dipeptide and that acts as a phytotoxin which is involved in the blackleg didease of canola. SirD catalyzes the O-prenylation of L-tyrosine (L-Tyr) in the presence of dimethylallyl diphosphate (DMAPP) to yield 4-O-dimethylallyl-L-Tyr, and therefore represents probably the first pathway-specific enzyme in the biosynthesis of sirodesmin PL. 4-O-dimethylallyl-L-Tyr, then undergoes condensation with L-Ser in a reaction catalyzed by the non-ribosomal peptide synthase sirP to form the diketopiperazine (DKP) backbone. Further bishydroxylation of the DKP performed by the cytochrome P450 monooxygenase sirC leads to the production of the intermediate phomamide. This step is essential to form the reactive thiol group required for toxicity of sirodesmin PL. The next steps of sirodesmin biosynthesis are not well understood yet, but some predictions could be made from intermediate compounds identification. Phomamide is converted into phomalizarine via oxidation, probably by sirT. Further oxidation, methylation (by sirM or sirN) and reduction steps convert phomalizarine to deacetyl sirodesmin. Finally, acetyltransferase sirH probably acetylates deacetyl sirodesmin to produce sirodesmin PL. This is Acetyltransferase sirH from Leptosphaeria maculans (Blackleg fungus).